We begin with the raw amino-acid sequence, 309 residues long: UDP-URONIC ACID TRANSPORTER 1 (309 aa).

A run of 10 helical transmembrane segments spans residues 9–29, 43–63, 78–98, 104–124, 131–151, 152–172, 193–213, 231–251, 256–278, and 283–302; these read TLFISTLIISWYSSNIGVLLL, IFLTMCHMSACAILSYISIVF, FLKVATLSIVFCASVVGGNIS, VSFNQAVGATTPFFTALFAYL, AWVTYGALVPVVAGVVIASGG, EPGFHWFGFIMCISATAARAF, LMLYMSPIAVIALLPVTLFME, WILLLVNSVMAYSANLLNFLV, SALTLQVLGNAKGAVAVVISILI, and VTVMGIGGYSITVLGVVAYG.

The protein belongs to the TPT transporter family. TPT (TC 2.A.7.9) subfamily. As to expression, ubiquitous.

Its subcellular location is the golgi apparatus membrane. Functionally, UDP-glucuronic acid transporter that modulates the polysaccharide composition of seed mucilage. Transports UDP-glucuronic acid (UDP-GlcA) and UDP-galacturonic acid (UDP-GalA) in vitro. This Arabidopsis thaliana (Mouse-ear cress) protein is UDP-URONIC ACID TRANSPORTER 1.